The sequence spans 395 residues: GDP-mannose 4,6 dehydratase (395 aa).

Polar residues-rich tracts occupy residues 1–13 (MLNT…STSD) and 24–36 (ESSS…QNGT). The segment at 1-44 (MLNTRLIAMSTSDGAPETKKQRPESSSNGSKDQNGTEAGAEGDS) is disordered. NADP(+) contacts are provided by residues 53-58 (GITGQD), 109-110 (DM), 131-135 (LAAQS), and Y146. T178 is an active-site residue. Active-site nucleophile residues include E180 and Y202. 3 residues coordinate NADP(+): K206, H232, and R237.

This sequence belongs to the NAD(P)-dependent epimerase/dehydratase family. GDP-mannose 4,6-dehydratase subfamily. Requires NADP(+) as cofactor.

It catalyses the reaction GDP-alpha-D-mannose = GDP-4-dehydro-alpha-D-rhamnose + H2O. The protein operates within nucleotide-sugar biosynthesis; GDP-L-fucose biosynthesis via de novo pathway; GDP-L-fucose from GDP-alpha-D-mannose: step 1/2. Functionally, catalyzes the conversion of GDP-D-mannose to GDP-4-dehydro-6-deoxy-D-mannose (also known as GDP-4-keto-6-deoxy-D-mannose or GDP-4-dehydro-alpha-D-rhamnose), an essential step in the synthesis of GDP-fucose from GDP-mannose. In Drosophila melanogaster (Fruit fly), this protein is GDP-mannose 4,6 dehydratase (Gmd).